A 206-amino-acid chain; its full sequence is FMN-dependent NADH:quinone oxidoreductase 2 (206 aa).

Residues S10, 16 to 18 (SYS), and 140 to 143 (SCGG) each bind FMN.

Belongs to the azoreductase type 1 family. In terms of assembly, homodimer. It depends on FMN as a cofactor.

The enzyme catalyses 2 a quinone + NADH + H(+) = 2 a 1,4-benzosemiquinone + NAD(+). It carries out the reaction N,N-dimethyl-1,4-phenylenediamine + anthranilate + 2 NAD(+) = 2-(4-dimethylaminophenyl)diazenylbenzoate + 2 NADH + 2 H(+). Quinone reductase that provides resistance to thiol-specific stress caused by electrophilic quinones. Functionally, also exhibits azoreductase activity. Catalyzes the reductive cleavage of the azo bond in aromatic azo compounds to the corresponding amines. In Cupriavidus pinatubonensis (strain JMP 134 / LMG 1197) (Cupriavidus necator (strain JMP 134)), this protein is FMN-dependent NADH:quinone oxidoreductase 2.